A 293-amino-acid chain; its full sequence is Lipoyl synthase (293 aa).

7 residues coordinate [4Fe-4S] cluster: Cys38, Cys43, Cys49, Cys64, Cys68, Cys71, and Ser277. The 217-residue stretch at 50–266 (WSRGTATFLL…STIAKNAGIR (217 aa)) folds into the Radical SAM core domain.

This sequence belongs to the radical SAM superfamily. Lipoyl synthase family. Requires [4Fe-4S] cluster as cofactor.

The protein localises to the cytoplasm. The catalysed reaction is [[Fe-S] cluster scaffold protein carrying a second [4Fe-4S](2+) cluster] + N(6)-octanoyl-L-lysyl-[protein] + 2 oxidized [2Fe-2S]-[ferredoxin] + 2 S-adenosyl-L-methionine + 4 H(+) = [[Fe-S] cluster scaffold protein] + N(6)-[(R)-dihydrolipoyl]-L-lysyl-[protein] + 4 Fe(3+) + 2 hydrogen sulfide + 2 5'-deoxyadenosine + 2 L-methionine + 2 reduced [2Fe-2S]-[ferredoxin]. The protein operates within protein modification; protein lipoylation via endogenous pathway; protein N(6)-(lipoyl)lysine from octanoyl-[acyl-carrier-protein]: step 2/2. Functionally, catalyzes the radical-mediated insertion of two sulfur atoms into the C-6 and C-8 positions of the octanoyl moiety bound to the lipoyl domains of lipoate-dependent enzymes, thereby converting the octanoylated domains into lipoylated derivatives. This is Lipoyl synthase from Chlorobium chlorochromatii (strain CaD3).